A 369-amino-acid chain; its full sequence is Putative transport protein YueF (369 aa).

Helical transmembrane passes span 13 to 33 (ILFV…FQPF), 34 to 54 (IVFI…YFIF), 73 to 93 (LIYL…GPII), 159 to 179 (AVFG…FILF), 213 to 233 (DTLA…GTAC), 234 to 254 (FIGY…VMAI), 271 to 291 (VIVG…VVVI), and 316 to 336 (IILL…ILAV).

This sequence belongs to the autoinducer-2 exporter (AI-2E) (TC 2.A.86) family.

The protein localises to the cell membrane. The protein is Putative transport protein YueF (yueF) of Bacillus subtilis (strain 168).